A 156-amino-acid chain; its full sequence is E3 ubiquitin-protein ligase RNF181 (156 aa).

Residues 79-120 form an RING-type; atypical zinc finger; that stretch reads CPVCLLEFEEQESVREMPCKHLFHTGCILPWLNKTNSCPLCR. The interval 135–156 is disordered; sequence KDKERRRQREHRLEDLHGAMYT.

This sequence belongs to the RNF181 family.

The enzyme catalyses S-ubiquitinyl-[E2 ubiquitin-conjugating enzyme]-L-cysteine + [acceptor protein]-L-lysine = [E2 ubiquitin-conjugating enzyme]-L-cysteine + N(6)-ubiquitinyl-[acceptor protein]-L-lysine.. It participates in protein modification; protein ubiquitination. Its function is as follows. E3 ubiquitin-protein ligase which accepts ubiquitin from an E2 ubiquitin-conjugating enzyme in the form of a thioester and then directly transfers the ubiquitin to targeted substrates. Catalyzes monoubiquitination of 26S proteasome subunit PSMC2/RPT1. The chain is E3 ubiquitin-protein ligase RNF181 (rnf181) from Danio rerio (Zebrafish).